The following is a 336-amino-acid chain: Adenosine deaminase (336 aa).

Zn(2+)-binding residues include His-15 and His-17. His-17, Asp-19, and Gly-172 together coordinate substrate. Residue His-199 participates in Zn(2+) binding. Glu-202 acts as the Proton donor in catalysis. Residue Asp-279 participates in Zn(2+) binding.

The protein belongs to the metallo-dependent hydrolases superfamily. Adenosine and AMP deaminases family. Adenosine deaminase subfamily. It depends on Zn(2+) as a cofactor.

The enzyme catalyses adenosine + H2O + H(+) = inosine + NH4(+). The catalysed reaction is 2'-deoxyadenosine + H2O + H(+) = 2'-deoxyinosine + NH4(+). Functionally, catalyzes the hydrolytic deamination of adenosine and 2-deoxyadenosine. In Streptococcus thermophilus (strain ATCC BAA-491 / LMD-9), this protein is Adenosine deaminase.